The following is a 222-amino-acid chain: Pyridoxine/pyridoxamine 5'-phosphate oxidase (222 aa).

Residues 71–76 (RMVLLK), 86–87 (YT), lysine 93, and glutamine 115 contribute to the FMN site. Lysine 76 is a binding site for substrate. Positions 133, 137, and 141 each coordinate substrate. FMN contacts are provided by residues 150–151 (QS) and tryptophan 195. 201-203 (RLH) is a binding site for substrate. Arginine 205 lines the FMN pocket.

It belongs to the pyridoxamine 5'-phosphate oxidase family. Homodimer. The cofactor is FMN.

It carries out the reaction pyridoxamine 5'-phosphate + O2 + H2O = pyridoxal 5'-phosphate + H2O2 + NH4(+). It catalyses the reaction pyridoxine 5'-phosphate + O2 = pyridoxal 5'-phosphate + H2O2. The protein operates within cofactor metabolism; pyridoxal 5'-phosphate salvage; pyridoxal 5'-phosphate from pyridoxamine 5'-phosphate: step 1/1. It functions in the pathway cofactor metabolism; pyridoxal 5'-phosphate salvage; pyridoxal 5'-phosphate from pyridoxine 5'-phosphate: step 1/1. Functionally, catalyzes the oxidation of either pyridoxine 5'-phosphate (PNP) or pyridoxamine 5'-phosphate (PMP) into pyridoxal 5'-phosphate (PLP). This Caulobacter vibrioides (strain ATCC 19089 / CIP 103742 / CB 15) (Caulobacter crescentus) protein is Pyridoxine/pyridoxamine 5'-phosphate oxidase.